A 183-amino-acid polypeptide reads, in one-letter code: Oleosin Bn-V (183 aa).

The interval 1–47 (PARTHHDITTRDQYPLISRDRDQYGMIGRDQYNMSGQNYSKSRQIAK) is polar. 2 consecutive repeats follow at residues 11–20 (RDQYPLISRD) and 21–30 (RDQYGMIGRD). A hydrophobic region spans residues 48–119 (ATTAVTAGDS…AAITVFSWIY (72 aa)). A run of 2 helical transmembrane segments spans residues 57 to 77 (SLLV…IVAT) and 99 to 119 (TGFL…SWIY). Residues 154–183 (YGQQHTGEEHDRDRDHRTDRDRTRGTQHTT) are disordered. A compositionally biased stretch (basic and acidic residues) spans 159-177 (TGEEHDRDRDHRTDRDRTR).

This sequence belongs to the oleosin family.

The protein localises to the lipid droplet. It is found in the membrane. May have a structural role to stabilize the lipid body during desiccation of the seed by preventing coalescence of the oil. Probably interacts with both lipid and phospholipid moieties of lipid bodies. May also provide recognition signals for specific lipase anchorage in lipolysis during seedling growth. The protein is Oleosin Bn-V of Brassica napus (Rape).